A 397-amino-acid chain; its full sequence is Transcription factor GATA-5 (397 aa).

Residues 48–116 form a disordered region; the sequence is GCEPSPQPPE…SAGGRDGSAY (69 aa). The segment covering 87-101 has biased composition (low complexity); sequence PPGATAFPFAHSPSG. Residues 102–112 show a composition bias toward gly residues; that stretch reads PGSGGSAGGRD. GATA-type zinc fingers lie at residues 189–213 and 243–267; these read CVNC…CNAC and CTNC…CNAC. The disordered stretch occupies residues 281–356; it reads AMKKESIQTR…ASGQEDDSLA (76 aa). A compositionally biased stretch (basic residues) spans 289–298; it reads TRKRKPKTIA. Low complexity predominate over residues 310–335; the sequence is ASASPSAVASTDSSAATSKAKPSLAS.

The protein localises to the nucleus. In terms of biological role, transcription factor required during cardiovascular development. Plays an important role in the transcriptional program(s) that underlies smooth muscle cell diversity. Binds to the functionally important CEF-1 nuclear protein binding site in the cardiac-specific slow/cardiac troponin C transcriptional enhancer. The polypeptide is Transcription factor GATA-5 (Homo sapiens (Human)).